The sequence spans 223 residues: Urease accessory protein UreG (223 aa).

The disordered stretch occupies residues 1-31 (MAKHSHDHTHDHHDRPRRVRKPGEPLRIGVG). 32 to 39 (GPVGSGKT) is a binding site for GTP.

It belongs to the SIMIBI class G3E GTPase family. UreG subfamily. In terms of assembly, homodimer. UreD, UreF and UreG form a complex that acts as a GTP-hydrolysis-dependent molecular chaperone, activating the urease apoprotein by helping to assemble the nickel containing metallocenter of UreC. The UreE protein probably delivers the nickel.

The protein localises to the cytoplasm. Facilitates the functional incorporation of the urease nickel metallocenter. This process requires GTP hydrolysis, probably effectuated by UreG. This is Urease accessory protein UreG from Mycobacterium marinum (strain ATCC BAA-535 / M).